The following is a 554-amino-acid chain: Thermosome subunit beta (554 aa).

The disordered stretch occupies residues 532-554 (GKKSGSEPSGKKEKDKEEKSSED). Over residues 540–554 (SGKKEKDKEEKSSED) the composition is skewed to basic and acidic residues.

The protein belongs to the TCP-1 chaperonin family. In terms of assembly, forms a Heterooligomeric complex of two stacked eight-membered rings.

Molecular chaperone; binds unfolded polypeptides in vitro, and has a weak ATPase activity. The sequence is that of Thermosome subunit beta (thsB) from Saccharolobus solfataricus (strain ATCC 35092 / DSM 1617 / JCM 11322 / P2) (Sulfolobus solfataricus).